A 1382-amino-acid chain; its full sequence is Insulin receptor (1382 aa).

The N-terminal stretch at 1 to 27 is a signal peptide; it reads MATGGRRGAAAAPLLVAVAALLLGAAG. Extracellular loops occupy residues 28–758 and 763–956; these read HLYP…PRPS and SLGD…NIAK. A disulfide bridge connects residues Cys-35 and Cys-53. N-linked (GlcNAc...) asparagine glycosylation is found at Asn-43, Asn-52, Asn-105, and Asn-138. 9 cysteine pairs are disulfide-bonded: Cys-153/Cys-182, Cys-186/Cys-209, Cys-196/Cys-215, Cys-219/Cys-228, Cys-223/Cys-234, Cys-235/Cys-243, Cys-239/Cys-252, Cys-255/Cys-264, and Cys-268/Cys-280. N-linked (GlcNAc...) asparagine glycosylation is present at Asn-242. A glycan (N-linked (GlcNAc...) asparagine) is linked at Asn-282. Intrachain disulfides connect Cys-286–Cys-311, Cys-293–Cys-301, Cys-315–Cys-328, Cys-331–Cys-335, and Cys-339–Cys-360. Asn-322 carries an N-linked (GlcNAc...) asparagine glycan. An N-linked (GlcNAc...) asparagine glycan is attached at Asn-364. Phosphoserine is present on Ser-400. Phosphotyrosine is present on Tyr-401. A Phosphoserine modification is found at Ser-407. Asn-424 and Asn-445 each carry an N-linked (GlcNAc...) asparagine glycan. The cysteines at positions 462 and 495 are disulfide-linked. Asn-541, Asn-633, Asn-651, and Asn-698 each carry an N-linked (GlcNAc...) asparagine glycan. Residues 624–726 enclose the Fibronectin type-III 1 domain; sequence VPLDPISVSN…SQILKELEES (103 aa). 2 cysteine pairs are disulfide-bonded: Cys-674/Cys-899 and Cys-825/Cys-834. Positions 686–708 are disordered; sequence SPPFESEDSQKHNQSEYEDSAGE. Residues 733-741 form an insulin-binding region; it reads EDYLHNVVF. The tract at residues 746–766 is disordered; the sequence is TSSGTGAEDPRPSRKRRSLGD. Fibronectin type-III domains are found at residues 757–842 and 853–947; these read PSRK…YVSA and IVGP…VTDY. N-linked (GlcNAc...) asparagine glycans are attached at residues Asn-769 and Asn-782. Asn-920 and Asn-933 each carry an N-linked (GlcNAc...) asparagine glycan. A helical membrane pass occupies residues 957–979; it reads IIIGPLIFVFLFSVVIGSIYLFL. Residues 980-1382 are Cytoplasmic-facing; the sequence is RKRQPDGPLG…ILTLPRSNPS (403 aa). Residues Tyr-992, Tyr-999, and Tyr-1011 each carry the phosphotyrosine; by autocatalysis modification. A region of interest (important for interaction with IRS1, SHC1 and STAT5B) is located at residue Tyr-999. A Protein kinase domain is found at 1023 to 1298; the sequence is ITLLRELGQG…LLKDDLHPSF (276 aa). Ser-1033 and Lys-1057 together coordinate ATP. Lys-1079 is covalently cross-linked (Glycyl lysine isopeptide (Lys-Gly) (interchain with G-Cter in ubiquitin)). Cys-1083 carries the post-translational modification S-nitrosocysteine. 1104-1110 serves as a coordination point for ATP; that stretch reads ELMAHGD. Asp-1159 acts as the Proton donor/acceptor in catalysis. ATP-binding positions include 1163-1164 and Asp-1177; that span reads RN. Residues Tyr-1185, Tyr-1189, Tyr-1190, Tyr-1355, and Tyr-1361 each carry the phosphotyrosine; by autocatalysis modification. The disordered stretch occupies residues 1360–1382; the sequence is PYTHMNGGKKNGRILTLPRSNPS. The PIK3R1-binding stretch occupies residues 1361–1364; sequence YTHM.

The protein belongs to the protein kinase superfamily. Tyr protein kinase family. Insulin receptor subfamily. Tetramer of 2 alpha and 2 beta chains linked by disulfide bonds. The alpha chains carry the insulin-binding regions, while the beta chains carry the kinase domain. Forms a hybrid receptor with IGF1R, the hybrid is a tetramer consisting of 1 alpha chain and 1 beta chain of INSR and 1 alpha chain and 1 beta chain of IGF1R. Interacts with SORBS1 but dissociates from it following insulin stimulation. Binds SH2B2. Activated form of INSR interacts (via Tyr-999) with the PTB/PID domains of IRS1 and SHC1. The sequences surrounding the phosphorylated NPXY motif contribute differentially to either IRS1 or SHC1 recognition. Interacts (via tyrosines in the C-terminus) with IRS2 (via PTB domain and 591-786 AA); the 591-786 would be the primary anchor of IRS2 to INSR while the PTB domain would have a stabilizing action on the interaction with INSR. Interacts with the SH2 domains of the 85 kDa regulatory subunit of PI3K (PIK3R1) in vitro, when autophosphorylated on tyrosine residues. Interacts with SOCS7. Interacts (via the phosphorylated Tyr-999), with SOCS3. Interacts (via the phosphorylated Tyr-1185, Tyr-1189, Tyr-1190) with SOCS1. Interacts with CAV2 (tyrosine-phosphorylated form); the interaction is increased with 'Tyr-27'phosphorylation of CAV2. Interacts with ARRB2. Interacts with GRB10; this interaction blocks the association between IRS1/IRS2 and INSR, significantly reduces insulin-stimulated tyrosine phosphorylation of IRS1 and IRS2 and thus decreases insulin signaling. Interacts with GRB7. Interacts with PDPK1. Interacts (via Tyr-1190) with GRB14 (via BPS domain); this interaction protects the tyrosines in the activation loop from dephosphorylation, but promotes dephosphorylation of Tyr-999, this results in decreased interaction with, and phosphorylation of, IRS1. Interacts (via subunit alpha) with ENPP1 (via 485-599 AA); this interaction blocks autophosphorylation. Interacts with PTPRE; this interaction is dependent of Tyr-1185, Tyr-1189 and Tyr-1190 of the INSR. Interacts with STAT5B (via SH2 domain). Interacts with PTPRF. Interacts with ATIC; ATIC together with PRKAA2/AMPK2 and HACD3/PTPLAD1 is proposed to be part of a signaling netwok regulating INSR autophosphorylation and endocytosis. Interacts with the cone snail venom insulin Con-Ins G1. Interacts with the insulin receptor SORL1; this interaction strongly increases its surface exposure, hence strengthens insulin signal reception. Interacts (tyrosine phosphorylated) with CCDC88A/GIV (via SH2-like region); binding requires autophosphorylation of the INSR C-terminal region. Interacts with GNAI3; the interaction is probably mediated by CCDC88A/GIV. Interacts with LMBRD1. Interacts (in response to insulin stimulation) with NCK1; this interaction may recruit PTPN1 to mediate INSR dephosphorylation. Interacts with CD248; this interaction diminishes INSR autophosphorylation. In terms of processing, after being transported from the endoplasmic reticulum to the Golgi apparatus, the single glycosylated precursor is further glycosylated and then cleaved, followed by its transport to the plasma membrane. Post-translationally, autophosphorylated on tyrosine residues in response to insulin. Phosphorylation of Tyr-999 is required for binding to IRS1, SHC1 and STAT5B. Dephosphorylated by PTPRE at Tyr-999, Tyr-1185, Tyr-1189 and Tyr-1190. May also be phosphorylated at Tyr-1185 and Tyr-1190 by mTORC2. Dephosphorylated by PTPRF and PTPN1. Dephosphorylated by PTPN2; down-regulates insulin-induced signaling. Dephosphorylation at Tyr-1189 and Tyr-1190 requires the SH2/SH3 adapter protein NCK1, probably to recruit its interaction partner PTPN1. S-nitrosylation at Cys-1083 by BLVRB inhibits the receptor tyrosine kinase, thereby inhibiting insulin signaling. In terms of processing, ubiquitinated by MARCHF1; leading to degradation thereby reducing surface INSR expression. In terms of tissue distribution, isoform Long and isoform Short are predominantly expressed in tissue targets of insulin metabolic effects: liver, adipose tissue and skeletal muscle but are also expressed in the peripheral nerve, kidney, pulmonary alveoli, pancreatic acini, placenta vascular endothelium, fibroblasts, monocytes, granulocytes, erythrocytes and skin. Isoform Short is preferentially expressed in fetal cells such as fetal fibroblasts, muscle, liver and kidney. Found as a hybrid receptor with IGF1R in muscle, heart, kidney, adipose tissue, skeletal muscle, hepatoma, fibroblasts, spleen and placenta (at protein level). Overexpressed in several tumors, including breast, colon, lung, ovary, and thyroid carcinomas.

It localises to the cell membrane. The protein localises to the late endosome. Its subcellular location is the lysosome. The catalysed reaction is L-tyrosyl-[protein] + ATP = O-phospho-L-tyrosyl-[protein] + ADP + H(+). Its activity is regulated as follows. Activated in response to insulin. Autophosphorylation activates the kinase activity. PTPN1, PTPRE and PTPRF dephosphorylate important tyrosine residues, thereby reducing INSR activity. Inhibited by ENPP1. GRB10 and GRB14 inhibit the catalytic activity of the INSR, they block access of substrates to the activated receptor. SOCS1 and SOCS3 act as negative regulators of INSR activity, they bind to the activated INRS and interfere with the phosphorylation of INSR substrates. In terms of biological role, receptor tyrosine kinase which mediates the pleiotropic actions of insulin. Binding of insulin leads to phosphorylation of several intracellular substrates, including, insulin receptor substrates (IRS1, 2, 3, 4), SHC, GAB1, CBL and other signaling intermediates. Each of these phosphorylated proteins serve as docking proteins for other signaling proteins that contain Src-homology-2 domains (SH2 domain) that specifically recognize different phosphotyrosine residues, including the p85 regulatory subunit of PI3K and SHP2. Phosphorylation of IRSs proteins lead to the activation of two main signaling pathways: the PI3K-AKT/PKB pathway, which is responsible for most of the metabolic actions of insulin, and the Ras-MAPK pathway, which regulates expression of some genes and cooperates with the PI3K pathway to control cell growth and differentiation. Binding of the SH2 domains of PI3K to phosphotyrosines on IRS1 leads to the activation of PI3K and the generation of phosphatidylinositol-(3, 4, 5)-triphosphate (PIP3), a lipid second messenger, which activates several PIP3-dependent serine/threonine kinases, such as PDPK1 and subsequently AKT/PKB. The net effect of this pathway is to produce a translocation of the glucose transporter SLC2A4/GLUT4 from cytoplasmic vesicles to the cell membrane to facilitate glucose transport. Moreover, upon insulin stimulation, activated AKT/PKB is responsible for: anti-apoptotic effect of insulin by inducing phosphorylation of BAD; regulates the expression of gluconeogenic and lipogenic enzymes by controlling the activity of the winged helix or forkhead (FOX) class of transcription factors. Another pathway regulated by PI3K-AKT/PKB activation is mTORC1 signaling pathway which regulates cell growth and metabolism and integrates signals from insulin. AKT mediates insulin-stimulated protein synthesis by phosphorylating TSC2 thereby activating mTORC1 pathway. The Ras/RAF/MAP2K/MAPK pathway is mainly involved in mediating cell growth, survival and cellular differentiation of insulin. Phosphorylated IRS1 recruits GRB2/SOS complex, which triggers the activation of the Ras/RAF/MAP2K/MAPK pathway. In addition to binding insulin, the insulin receptor can bind insulin-like growth factors (IGFI and IGFII). Isoform Short has a higher affinity for IGFII binding. When present in a hybrid receptor with IGF1R, binds IGF1. PubMed:12138094 shows that hybrid receptors composed of IGF1R and INSR isoform Long are activated with a high affinity by IGF1, with low affinity by IGF2 and not significantly activated by insulin, and that hybrid receptors composed of IGF1R and INSR isoform Short are activated by IGF1, IGF2 and insulin. In contrast, PubMed:16831875 shows that hybrid receptors composed of IGF1R and INSR isoform Long and hybrid receptors composed of IGF1R and INSR isoform Short have similar binding characteristics, both bind IGF1 and have a low affinity for insulin. In adipocytes, inhibits lipolysis. The sequence is that of Insulin receptor (INSR) from Homo sapiens (Human).